A 669-amino-acid chain; its full sequence is Carnitine O-palmitoyltransferase 2, mitochondrial (669 aa).

A mitochondrion-targeting transit peptide spans 1–36 (MMAGLLSTQCNSTLSKLKHLSNNPALSVLTSTHRKY). Over 37–190 (SSKDGAGSEY…GLLEPEVFHL (154 aa)) the chain is Mitochondrial matrix. The segment at residues 191 to 220 (NPAKSDTDSFKKLIRWVPPSISWFGAYMVN) is an intramembrane region (note=Mitochondrial inner membrane). Over 221–669 (AYPLDMSQYF…FTVLDGNPIH (449 aa)) the chain is Mitochondrial matrix. The Proton acceptor role is filled by His384. CoA is bound at residue 464 to 476 (GKEQLKKKKLSPD). Positions 498, 500, and 511 each coordinate (R)-carnitine.

The protein belongs to the carnitine/choline acetyltransferase family.

The protein resides in the mitochondrion inner membrane. It catalyses the reaction (R)-carnitine + hexadecanoyl-CoA = O-hexadecanoyl-(R)-carnitine + CoA. The enzyme catalyses octanoyl-CoA + (R)-carnitine = O-octanoyl-(R)-carnitine + CoA. It carries out the reaction decanoyl-CoA + (R)-carnitine = O-decanoyl-(R)-carnitine + CoA. The catalysed reaction is dodecanoyl-CoA + (R)-carnitine = O-dodecanoyl-R-carnitine + CoA. It catalyses the reaction tetradecanoyl-CoA + (R)-carnitine = O-tetradecanoyl-(R)-carnitine + CoA. The enzyme catalyses (R)-carnitine + octadecanoyl-CoA = O-octadecanoyl-(R)-carnitine + CoA. It carries out the reaction eicosanoyl-CoA + (R)-carnitine = O-eicosanoyl-(R)-carnitine + CoA. The catalysed reaction is (9Z)-tetradecenoyl-CoA + (R)-carnitine = O-(9Z)-tetradecenoyl-(R)-carnitine + CoA. It catalyses the reaction (5Z)-tetradecenoyl-CoA + (R)-carnitine = O-(5Z)-tetradecenoyl-(R)-carnitine + CoA. The enzyme catalyses (R)-carnitine + (9Z)-octadecenoyl-CoA = O-(9Z)-octadecenoyl-(R)-carnitine + CoA. It carries out the reaction 4,8-dimethylnonanoyl-CoA + (R)-carnitine = O-4,8-dimethylnonanoyl-(R)-carnitine + CoA. Its pathway is lipid metabolism; fatty acid beta-oxidation. Its function is as follows. Involved in the intramitochondrial synthesis of acylcarnitines from accumulated acyl-CoA metabolites. Reconverts acylcarnitines back into the respective acyl-CoA esters that can then undergo beta-oxidation, an essential step for the mitochondrial uptake of long-chain fatty acids and their subsequent beta-oxidation in the mitochondrion. Active with medium (C8-C12) and long-chain (C14-C18) acyl-CoA esters. In Danio rerio (Zebrafish), this protein is Carnitine O-palmitoyltransferase 2, mitochondrial (cpt2).